We begin with the raw amino-acid sequence, 259 residues long: Ubiquinol-cytochrome c reductase complex assembly factor 1 (259 aa).

It belongs to the CBP3 family. Interacts with sloth1; the interaction is probably involved in the assembly and stability of the mitochondrial ubiquinol-cytochrome c reductase complex.

It is found in the mitochondrion inner membrane. Required for the assembly of the ubiquinol-cytochrome c reductase complex (mitochondrial respiratory chain complex III or cytochrome b-c1 complex). May be involved in cytochrome b translation and/or stability. The sequence is that of Ubiquinol-cytochrome c reductase complex assembly factor 1 from Drosophila melanogaster (Fruit fly).